Consider the following 462-residue polypeptide: uncharacterized protein (462 aa).

6 residues coordinate a divalent metal cation: Asp-12, His-14, Asp-48, Asn-81, His-179, and His-202. Positions 258 to 291 (ESAETKAFLNEKEREAEEKLSDAVAELAQDAEVK) form a coiled coil.

The protein belongs to the metallophosphoesterase superfamily. Requires a divalent metal cation as cofactor.

This is an uncharacterized protein from Bacillus subtilis (strain 168).